A 695-amino-acid polypeptide reads, in one-letter code: DNA ligase (695 aa).

Residues 44-48 (DAEYD), 93-94 (SL), and Glu123 each bind NAD(+). Lys125 functions as the N6-AMP-lysine intermediate in the catalytic mechanism. NAD(+)-binding residues include Arg146, Glu184, Lys300, and Lys324. Positions 418, 421, 436, and 442 each coordinate Zn(2+). Residues 605-694 (SAAKPLAGIT…PDAARSMAQR (90 aa)) form the BRCT domain.

This sequence belongs to the NAD-dependent DNA ligase family. LigA subfamily. Mg(2+) is required as a cofactor. It depends on Mn(2+) as a cofactor.

It catalyses the reaction NAD(+) + (deoxyribonucleotide)n-3'-hydroxyl + 5'-phospho-(deoxyribonucleotide)m = (deoxyribonucleotide)n+m + AMP + beta-nicotinamide D-nucleotide.. In terms of biological role, DNA ligase that catalyzes the formation of phosphodiester linkages between 5'-phosphoryl and 3'-hydroxyl groups in double-stranded DNA using NAD as a coenzyme and as the energy source for the reaction. It is essential for DNA replication and repair of damaged DNA. The polypeptide is DNA ligase (Acidothermus cellulolyticus (strain ATCC 43068 / DSM 8971 / 11B)).